The chain runs to 383 residues: Protein arginine N-methyltransferase PRMT10 (383 aa).

The segment at 1 to 23 is disordered; sequence MRSSQNGGAMGGRAAGTGGGGPS. Over residues 8 to 22 the composition is skewed to gly residues; that stretch reads GAMGGRAAGTGGGGP. An SAM-dependent MTase PRMT-type domain is found at 29 to 360; sequence EVDYAQYFCT…KENHRLMEIE (332 aa). Gln45, Arg54, Gly78, Glu100, and Glu129 together coordinate S-adenosyl-L-methionine. Catalysis depends on residues Glu143 and Glu152. Residues 190 to 230 form a dimerization arm region; sequence DRKRNDFDGAMADWHNFSDEIKSYYGVDMGVLTKPFAEEQE.

Belongs to the class I-like SAM-binding methyltransferase superfamily. Protein arginine N-methyltransferase family. As to quaternary structure, ring-like homodimer.

It catalyses the reaction L-arginyl-[protein] + 2 S-adenosyl-L-methionine = N(omega),N(omega)-dimethyl-L-arginyl-[protein] + 2 S-adenosyl-L-homocysteine + 2 H(+). Methylates (mono and asymmetric dimethylation) the guanidino nitrogens of arginyl residues in some proteins. Essential for regulating flowering time. This is Protein arginine N-methyltransferase PRMT10 (PRMT10) from Arabidopsis thaliana (Mouse-ear cress).